A 136-amino-acid polypeptide reads, in one-letter code: Small ribosomal subunit protein uS19 (136 aa).

Belongs to the universal ribosomal protein uS19 family.

Protein S19 forms a complex with S13 that binds strongly to the 16S ribosomal RNA. The polypeptide is Small ribosomal subunit protein uS19 (Methanosphaera stadtmanae (strain ATCC 43021 / DSM 3091 / JCM 11832 / MCB-3)).